We begin with the raw amino-acid sequence, 137 residues long: Basic phospholipase A2 homolog Cax-K49 (137 aa).

The N-terminal stretch at 1–16 is a signal peptide; it reads MRTFWIVAMLLVGVEG. 7 cysteine pairs are disulfide-bonded: cysteine 42–cysteine 131, cysteine 44–cysteine 60, cysteine 59–cysteine 111, cysteine 65–cysteine 137, cysteine 66–cysteine 104, cysteine 73–cysteine 97, and cysteine 91–cysteine 102. Positions 121-133 are important for membrane-damaging activities in eukaryotes and bacteria; heparin-binding; that stretch reads KKYKIYPKFLCKK.

In terms of assembly, homodimer; non-covalently linked. In terms of tissue distribution, expressed by the venom gland.

The protein resides in the secreted. In terms of biological role, snake venom phospholipase A2 homolog that lacks enzymatic activity. Displays edema-inducing activities and may be myotoxic. A model of myotoxic mechanism has been proposed: an apo Lys49-PLA2 is activated by the entrance of a hydrophobic molecule (e.g. fatty acid) at the hydrophobic channel of the protein leading to a reorientation of a monomer. This reorientation causes a transition between 'inactive' to 'active' states, causing alignment of C-terminal and membrane-docking sites (MDoS) side-by-side and putting the membrane-disruption sites (MDiS) in the same plane, exposed to solvent and in a symmetric position for both monomers. The MDoS region stabilizes the toxin on membrane by the interaction of charged residues with phospholipid head groups. Subsequently, the MDiS region destabilizes the membrane with penetration of hydrophobic residues. This insertion causes a disorganization of the membrane, allowing an uncontrolled influx of ions (i.e. calcium and sodium), and eventually triggering irreversible intracellular alterations and cell death. The protein is Basic phospholipase A2 homolog Cax-K49 of Crotalus atrox (Western diamondback rattlesnake).